Here is a 501-residue protein sequence, read N- to C-terminus: Ribose import ATP-binding protein RbsA (501 aa).

ABC transporter domains are found at residues 5-241 (LSLE…VGRK) and 252-498 (LRND…TGGV). Position 37–44 (37–44 (GENGAGKS)) interacts with ATP.

The protein belongs to the ABC transporter superfamily. Ribose importer (TC 3.A.1.2.1) family. As to quaternary structure, the complex is composed of an ATP-binding protein (RbsA), two transmembrane proteins (RbsC) and a solute-binding protein (RbsB).

The protein resides in the cell inner membrane. The enzyme catalyses D-ribose(out) + ATP + H2O = D-ribose(in) + ADP + phosphate + H(+). In terms of biological role, part of the ABC transporter complex RbsABC involved in ribose import. Responsible for energy coupling to the transport system. This Hahella chejuensis (strain KCTC 2396) protein is Ribose import ATP-binding protein RbsA.